The chain runs to 261 residues: MICOS complex subunit Mic25 (261 aa).

Glycine 2 is lipidated: N-myristoyl glycine. A phosphoserine mark is found at serine 13, serine 31, and serine 33. 3 disordered regions span residues 39–59 (KDCSQPSAGEQLAPGPGPECS), 81–114 (CGPAEGTYKAPQGDFKVSRAENSDGQQSSAVKED), and 140–165 (TEKHLKASLPKKKATHEQQQSDRLTR). A coiled-coil region spans residues 109-202 (SAVKEDLKKF…AELYKLSSQQ (94 aa)). Residues 154 to 165 (THEQQQSDRLTR) are compositionally biased toward basic and acidic residues. Residues 220 to 261 (EPVCSGLQAQILRCYRDHLHEVLLCSDLAKAYQHCVSTARKG) form the CHCH domain. 2 short sequence motifs (cx9C motif) span residues 223–233 (CSGLQAQILRC) and 244–254 (CSDLAKAYQHC). Disulfide bonds link cysteine 223/cysteine 254 and cysteine 233/cysteine 244.

This sequence belongs to the MICOS complex subunit Mic19 family. Metazoan Mic25 subfamily. In terms of assembly, component of the mitochondrial contact site and cristae organizing system (MICOS) complex, composed of at least MICOS10/MIC10, CHCHD3/MIC19, CHCHD6/MIC25, APOOL/MIC27, IMMT/MIC60, APOO/MIC23/MIC26 and MICOS13/MIC13. This complex was also known under the names MINOS or MitOS complex. The MICOS complex associates with mitochondrial outer membrane proteins SAMM50, MTX1 and MTX2 (together described as components of the mitochondrial outer membrane sorting assembly machinery (SAM) complex) and DNAJC11, mitochondrial inner membrane protein TMEM11 and with HSPA9. The MICOS and SAM complexes together with DNAJC11 are part of a large protein complex spanning both membranes termed the mitochondrial intermembrane space bridging (MIB) complex. Interacts with DISC1. Interacts with IMMT/MIC60.

It localises to the mitochondrion inner membrane. The protein localises to the mitochondrion. In terms of biological role, component of the MICOS complex, a large protein complex of the mitochondrial inner membrane that plays crucial roles in the maintenance of crista junctions, inner membrane architecture, and formation of contact sites to the outer membrane. This is MICOS complex subunit Mic25 (Chchd6) from Rattus norvegicus (Rat).